A 2009-amino-acid polypeptide reads, in one-letter code: Rootletin (2009 aa).

Coiled coils occupy residues 74–265 (EMAS…VTSD) and 346–438 (ASLH…LRLQ). 5 disordered regions span residues 462–519 (ALSD…CSDS), 575–594 (RDQT…EAQR), 636–665 (ELKR…LERS), 1180–1225 (EAQR…ELRS), and 1448–1501 (GRVS…EAVR). Residues 463–484 (LSDTESGVQLSSSERTADTSDG) are compositionally biased toward polar residues. Coiled coils occupy residues 550–1058 (LGSV…LLAE) and 1091–1439 (LEME…GLRS). Positions 577–586 (QTAASAQAQE) are enriched in low complexity. The segment covering 656-665 (ARARRELERS) has biased composition (basic and acidic residues). Phosphoserine occurs at positions 1453, 1463, and 1469. Tyrosine 1475 is subject to Phosphotyrosine. 5 positions are modified to phosphoserine: serine 1476, serine 1479, serine 1483, serine 1489, and serine 1568. Residues 1479 to 1494 (SQPPSPGLIASPAPPD) are compositionally biased toward pro residues. Coiled coils occupy residues 1498–1697 (EAVR…GTLQ) and 1744–1998 (HLQK…RSSA). The tract at residues 1957-2009 (QVQTERTLEARERAHRQRVSGLEEQVSTLKAQLHQELRRSSASVSLPPGTPEK) is disordered.

It belongs to the rootletin family. As to quaternary structure, homomer. Interacts with KLC3, NEK2 and the N-terminus of CEP250. Interacts with CEP44. Post-translationally, phosphorylated by NEK2 which may regulate its association with centrosomes. As to expression, highest expression detected in photoreceptor cells of retina. Expressed at lower levels in brain, trachea and kidney. Detected in all major ciliated epithelia. During embryonic development, enriched along the apical domains of neuroepithelium in brain ventricular zone, in primordia of retinal pigment epithelia and in neural retina.

Its subcellular location is the cytoplasm. The protein resides in the cytoskeleton. The protein localises to the microtubule organizing center. It is found in the centrosome. It localises to the centriole. Its subcellular location is the cilium basal body. Functionally, major structural component of the ciliary rootlet, a cytoskeletal-like structure in ciliated cells which originates from the basal body at the proximal end of a cilium and extends proximally toward the cell nucleus. Furthermore, is required for the correct positioning of the cilium basal body relative to the cell nucleus, to allow for ciliogenesis. Contributes to centrosome cohesion before mitosis. This is Rootletin from Mus musculus (Mouse).